A 176-amino-acid polypeptide reads, in one-letter code: Large ribosomal subunit protein uL6 (176 aa).

The protein belongs to the universal ribosomal protein uL6 family. Part of the 50S ribosomal subunit.

In terms of biological role, this protein binds to the 23S rRNA, and is important in its secondary structure. It is located near the subunit interface in the base of the L7/L12 stalk, and near the tRNA binding site of the peptidyltransferase center. The chain is Large ribosomal subunit protein uL6 from Paraburkholderia phytofirmans (strain DSM 17436 / LMG 22146 / PsJN) (Burkholderia phytofirmans).